Consider the following 269-residue polypeptide: NAD kinase (269 aa).

Residue D45 is the Proton acceptor of the active site. NAD(+) contacts are provided by residues 45-46 (DG), 122-123 (NE), R149, D151, and A186.

It belongs to the NAD kinase family. Requires a divalent metal cation as cofactor.

It localises to the cytoplasm. It carries out the reaction NAD(+) + ATP = ADP + NADP(+) + H(+). Functionally, involved in the regulation of the intracellular balance of NAD and NADP, and is a key enzyme in the biosynthesis of NADP. Catalyzes specifically the phosphorylation on 2'-hydroxyl of the adenosine moiety of NAD to yield NADP. The polypeptide is NAD kinase (Staphylococcus haemolyticus (strain JCSC1435)).